Here is a 633-residue protein sequence, read N- to C-terminus: Putative serine/threonine-protein kinase L232 (633 aa).

Positions 10–314 (YTIVDKLSEG…QSRKLFYEIL (305 aa)) constitute a Protein kinase domain. ATP-binding positions include 16–24 (LSEGTYGIV) and lysine 39. Catalysis depends on aspartate 133, which acts as the Proton acceptor.

Belongs to the protein kinase superfamily. Ser/Thr protein kinase family.

It catalyses the reaction L-seryl-[protein] + ATP = O-phospho-L-seryl-[protein] + ADP + H(+). The catalysed reaction is L-threonyl-[protein] + ATP = O-phospho-L-threonyl-[protein] + ADP + H(+). This Acanthamoeba polyphaga mimivirus (APMV) protein is Putative serine/threonine-protein kinase L232.